The following is a 401-amino-acid chain: Inactive leucine-rich repeat receptor-like protein kinase CORYNE (401 aa).

An N-terminal signal peptide occupies residues 1-33; it reads MKQRRRRNGCSSSNTISLLLLFFLVFFSRTSTS. At 34–62 the chain is on the extracellular side; it reads TSCRRRTVKHLSTTSTSSTPLESRITSKV. The helical transmembrane segment at 63–83 threads the bilayer; that stretch reads IVISIVSGILTGLVSALVLAF. The Cytoplasmic portion of the chain corresponds to 84 to 401; it reads LVRSIVKFMK…VHMLTQLHSF (318 aa). The Protein kinase domain maps to 118–401; the sequence is SNGIQLLGSD…VHMLTQLHSF (284 aa). ATP contacts are provided by residues 124–132 and K146; that span reads LGSDLNGKY.

This sequence belongs to the protein kinase superfamily. Ser/Thr protein kinase family. In terms of assembly, self-interacts. Parts of a tetrameric complex made of two CLV2/CRN heterodimers that can interact with CLV3 and CLE peptides. CLV2/CRN heterodimer interacts with CLV1 homodimers. Interacts with CLV1 and CLV2. CLV2/CRN heterodimer can interact with BAM3. In terms of tissue distribution, present in roots, stems, leaves, inflorescence, flowers and siliques. Mostly expressed in shoot tips and, to a lesser extent, in young organs and roots. Also expressed in the inner tissues of the proximal root meristem. Expressed in the vascular cylinder of root tips, mostly in phloem poles.

The protein localises to the cell membrane. Its subcellular location is the endoplasmic reticulum membrane. In terms of biological role, involved in the perception of CLV3 and CLV3-like (CLE) peptides, that act as extracellular signals regulating meristem maintenance. Modulates root, shoot and flower apical meristem maintenance and floral organ development regulation, probably via CLAVATA (CLV)-like pathways involving at least CLV3 and CLE19. In complex with CLV2, perceives secreted CLV3-like effector proteins from plant-parasitic cyst nematodes as ligand mimics of the plant CLE signaling pathway. This recognition is required for proper feeding structure (syncytium) development and ultimately successful nematode infection. CLE14 perception by CLV2/CRN complex triggers root meristem differentiation. Required for the sensing of the root CLE peptides (e.g. CLE8, CLE9/CLE10, CLE11, CLE13, CLE14, CLE16, CLE17, CLE18, CLE20, CLE21, CLE25, CLE26, CLE40, CLE41/CLE44 and CLE45), which also involves CLV2 and leads to root growth regulation, mostly in the phloem and protophloem. Promotes the accumulation of BAM3, especially at later stages of protophloem development. The protein is Inactive leucine-rich repeat receptor-like protein kinase CORYNE of Arabidopsis thaliana (Mouse-ear cress).